Here is a 540-residue protein sequence, read N- to C-terminus: Protein dml-1 (540 aa).

Positions 517-540 are disordered; sequence NELAEMADEYHEGWSSGSDDGDDD.

The protein belongs to the misato family.

Its subcellular location is the mitochondrion. In terms of biological role, involved in the partitioning of the mitochondrial organelle and mitochondrial DNA (mtDNA) inheritance. In Neurospora crassa (strain ATCC 24698 / 74-OR23-1A / CBS 708.71 / DSM 1257 / FGSC 987), this protein is Protein dml-1 (dml-1).